A 372-amino-acid chain; its full sequence is 4-hydroxy-3-methylbut-2-en-1-yl diphosphate synthase (flavodoxin) (372 aa).

[4Fe-4S] cluster-binding residues include cysteine 270, cysteine 273, cysteine 305, and glutamate 312.

It belongs to the IspG family. [4Fe-4S] cluster serves as cofactor.

It carries out the reaction (2E)-4-hydroxy-3-methylbut-2-enyl diphosphate + oxidized [flavodoxin] + H2O + 2 H(+) = 2-C-methyl-D-erythritol 2,4-cyclic diphosphate + reduced [flavodoxin]. It participates in isoprenoid biosynthesis; isopentenyl diphosphate biosynthesis via DXP pathway; isopentenyl diphosphate from 1-deoxy-D-xylulose 5-phosphate: step 5/6. Its function is as follows. Converts 2C-methyl-D-erythritol 2,4-cyclodiphosphate (ME-2,4cPP) into 1-hydroxy-2-methyl-2-(E)-butenyl 4-diphosphate. This chain is 4-hydroxy-3-methylbut-2-en-1-yl diphosphate synthase (flavodoxin), found in Citrobacter koseri (strain ATCC BAA-895 / CDC 4225-83 / SGSC4696).